We begin with the raw amino-acid sequence, 409 residues long: Phosphoserine phosphatase SerB2 (409 aa).

2 consecutive ACT domains span residues 8–86 (LITV…RSDD) and 102–174 (GRPI…DYGL). D185 (nucleophile) is an active-site residue. The Mg(2+) site is built by D185 and D187. D187 acts as the Proton donor in catalysis. Substrate contacts are provided by residues E194, R230, 273–274 (SG), and K318. D341 is a binding site for Mg(2+). N344 is a binding site for substrate.

Belongs to the HAD-like hydrolase superfamily. SerB family. In terms of assembly, homodimer. The dimeric population shifts to a tetramer in the presence of L-serine, which inactivates the enzyme. Mg(2+) is required as a cofactor. The cofactor is Mn(2+).

It localises to the secreted. The protein localises to the host cytoplasm. It is found in the host cytosol. It carries out the reaction O-phospho-L-serine + H2O = L-serine + phosphate. The catalysed reaction is O-phospho-D-serine + H2O = D-serine + phosphate. It catalyses the reaction O-phospho-L-seryl-[protein] + H2O = L-seryl-[protein] + phosphate. The enzyme catalyses O-phospho-L-threonyl-[protein] + H2O = L-threonyl-[protein] + phosphate. The protein operates within amino-acid biosynthesis; L-serine biosynthesis; L-serine from 3-phospho-D-glycerate: step 3/3. Clofazimine, a drug being evaluated for XDR and MDR tuberculosis, inhibits SerB2 phosphatase activity and reverses the various functional effects described above and interactions with host proteins. Is inhibited by known PSP inhibitors such as chlorpromazine, DL-AP3 and sodium orthovanadate, but not by okadaic acid. By binding to the ACT domains, amino-acids have various effects on enzyme activity: L-serine and L-glycine act as inhibitors, whereas L-lysine, L-tyrosine and L-phenylalanine are activators. High throughput screen has been performed to identify specific PSP inhibitors with activity against intracellular bacteria; the two best hits identified in this screen, clorobiocin and rosaniline, are bactericidal and kill bacteria in infected macrophages in a dose-dependent manner. In terms of biological role, catalyzes the dephosphorylation of O-phospho-L-serine into L-serine, a step in the L-serine biosynthetic pathway. Exhibits high specificity for L-phosphoserine compared to substrates like L-phosphothreonine (5% relative activity) and L-phosphotyrosine (1.7% relative activity). Its function is as follows. In the host, induces significant cytoskeleton rearrangements through cofilin dephosphorylation and its subsequent activation, and affects the expression of genes that regulate actin dynamics. It specifically interacts with HSP90, HSP70 and HSP27 that block apoptotic pathways but not with other HSPs. Also interacts with GAPDH. It actively dephosphorylates MAP kinase p38 and NF-kappa B p65 (specifically at Ser-536) that play crucial roles in inflammatory and immune responses. This in turn leads to down-regulation of Interleukin 8, a chemotactic and inflammatory cytokine. Thus might help the pathogen to evade the host's immune response. Exogenous addition of purified SerB2 protein to human THP-1 cells (that can be differentiated into macrophage-like cells) induces microtubule rearrangements; the phosphatase activity is co-related to the elicited rearrangements, while addition of the ACT-domains alone elicits no rearrangements. In Mycobacterium tuberculosis (strain ATCC 25618 / H37Rv), this protein is Phosphoserine phosphatase SerB2.